A 266-amino-acid chain; its full sequence is Endoplasmic reticulum vesicle protein 25 (266 aa).

A signal peptide spans 1 to 26; that stretch reads MGSSPQSSTRTLLGLLFLLLVQLSSA. Over 27 to 188 the chain is Lumenal; sequence LKFDLHASSG…TNESTNERVK (162 aa). A GOLD domain is found at 39–129; it reads ERCIRNFVFK…YKSVELDVEI (91 aa). A helical transmembrane segment spans residues 189–209; the sequence is WFAFGTMGMLVGLGVWQVVYL. The Cytoplasmic portion of the chain corresponds to 210-266; sequence RAYFRYVDFPVSWRVDGVVANCCSCCEQVEASYLRSSRVVFWSPLVMWTRLSWLILR.

Belongs to the EMP24/GP25L family.

It is found in the endoplasmic reticulum membrane. It localises to the golgi apparatus membrane. In terms of biological role, constituent of COPII-coated endoplasmic reticulum-derived transport vesicles. Required for efficient transport of a subset of secretory proteins to the Golgi. Facilitates retrograde transport from the Golgi to the endoplasmic reticulum. In Aspergillus fumigatus (strain ATCC MYA-4609 / CBS 101355 / FGSC A1100 / Af293) (Neosartorya fumigata), this protein is Endoplasmic reticulum vesicle protein 25 (erv25).